Here is a 1023-residue protein sequence, read N- to C-terminus: Rho GTPase-activating protein 11A (1023 aa).

The region spanning 49–239 (VPFNALPHSA…TLIDYASDIG (191 aa)) is the Rho-GAP domain. Ser-285 carries the phosphoserine modification. Phosphothreonine is present on Thr-306. A phosphoserine mark is found at Ser-316 and Ser-318. Thr-323 is modified (phosphothreonine). 3 positions are modified to phosphoserine: Ser-339, Ser-340, and Ser-484. Residue Thr-508 is modified to Phosphothreonine. The interval 567 to 589 (TPSNLNNKHNSNITSSPLSGDEN) is disordered. 4 positions are modified to phosphoserine: Ser-582, Ser-585, Ser-638, and Ser-675. Positions 714 to 734 (KQEFSSDEEIKKQQSPKDKLN) are disordered. Residues 721–734 (EEIKKQQSPKDKLN) show a composition bias toward basic and acidic residues. Ser-847 is subject to Phosphoserine. Thr-866 bears the Phosphothreonine mark. Ser-868 carries the phosphoserine modification. Residues 999–1023 (AWYKGSPKHPIGKTQLLPTSKPVDL) are disordered.

Its subcellular location is the nucleus. Functionally, GTPase activator for the Rho-type GTPases by converting them to an inactive GDP-bound state. This chain is Rho GTPase-activating protein 11A, found in Homo sapiens (Human).